We begin with the raw amino-acid sequence, 585 residues long: CTP synthase (585 aa).

The amidoligase domain stretch occupies residues 1 to 281 (MPALRKHPHT…DAYVVRRLNL (281 aa)). Ser23 provides a ligand contact to CTP. Ser23 contacts UTP. ATP-binding positions include 24–29 (SLGKGL) and Asp81. Mg(2+)-binding residues include Asp81 and Glu155. CTP contacts are provided by residues 162–164 (DIE), 202–207 (KTKPTQ), and Lys238. UTP contacts are provided by residues 202–207 (KTKPTQ) and Lys238. The 249-residue stretch at 306-554 (RIALVGKYID…VGAAVEYNNG (249 aa)) folds into the Glutamine amidotransferase type-1 domain. L-glutamine is bound at residue Gly369. Cys396 acts as the Nucleophile; for glutamine hydrolysis in catalysis. Residues 397–400 (LGLQ), Glu419, and Arg480 each bind L-glutamine. Catalysis depends on residues His527 and Glu529. Positions 564–585 (IPTADHQSNGAEHALEDAPARG) are disordered. The segment covering 576–585 (HALEDAPARG) has biased composition (basic and acidic residues).

This sequence belongs to the CTP synthase family. As to quaternary structure, homotetramer.

It catalyses the reaction UTP + L-glutamine + ATP + H2O = CTP + L-glutamate + ADP + phosphate + 2 H(+). It carries out the reaction L-glutamine + H2O = L-glutamate + NH4(+). The catalysed reaction is UTP + NH4(+) + ATP = CTP + ADP + phosphate + 2 H(+). The protein operates within pyrimidine metabolism; CTP biosynthesis via de novo pathway; CTP from UDP: step 2/2. Its activity is regulated as follows. Allosterically activated by GTP, when glutamine is the substrate; GTP has no effect on the reaction when ammonia is the substrate. The allosteric effector GTP functions by stabilizing the protein conformation that binds the tetrahedral intermediate(s) formed during glutamine hydrolysis. Inhibited by the product CTP, via allosteric rather than competitive inhibition. Functionally, catalyzes the ATP-dependent amination of UTP to CTP with either L-glutamine or ammonia as the source of nitrogen. Regulates intracellular CTP levels through interactions with the four ribonucleotide triphosphates. The chain is CTP synthase from Mycolicibacterium gilvum (strain PYR-GCK) (Mycobacterium gilvum (strain PYR-GCK)).